A 320-amino-acid chain; its full sequence is MKRIGILTSGGDAAGMNAAVRAIARSAMNAGLEAYGINYGYKGLVEGNIFKMESTKLDEIINRGGTILYSARFPEFAETETQLKGIEQLKKFGIEALVVIGGDGSYHGAEKLTMHGYNSIGVPGTIDNDIPGTDFTIGFDTAANVAMEALDRINDTATSHQRVFVVEVMGRGAGDIALWSGIATGADAIVIPEREYDIEAIANKISENRKNGKDHGLIVLAEGVMGAAEFKEKLDQYGDFDSRAITLGHIQRGGNPTVKDRVLATRLGDYAIRLLLEGKGGLAIGIHDNQLVATDIIDTLENHKHQTDVSLQDLNDRVRF.

Gly11 is a binding site for ATP. Arg21–Arg25 is a binding site for ADP. ATP is bound by residues Arg72 to Phe73 and Gly102 to Ser105. Asp103 is a Mg(2+) binding site. Substrate contacts are provided by residues Thr125–Asp127, Arg162, and Met169–Arg171. Asp127 (proton acceptor) is an active-site residue. Residues Gly185–Asp187 and Lys213–His215 each bind ADP. Substrate-binding positions include Glu222, Arg243, and His249–Arg252.

Belongs to the phosphofructokinase type A (PFKA) family. ATP-dependent PFK group I subfamily. Prokaryotic clade 'B1' sub-subfamily. As to quaternary structure, homotetramer. Mg(2+) is required as a cofactor.

It is found in the cytoplasm. It catalyses the reaction beta-D-fructose 6-phosphate + ATP = beta-D-fructose 1,6-bisphosphate + ADP + H(+). It participates in carbohydrate degradation; glycolysis; D-glyceraldehyde 3-phosphate and glycerone phosphate from D-glucose: step 3/4. Its activity is regulated as follows. Allosterically activated by ADP and other diphosphonucleosides, and allosterically inhibited by phosphoenolpyruvate. Its function is as follows. Catalyzes the phosphorylation of D-fructose 6-phosphate to fructose 1,6-bisphosphate by ATP, the first committing step of glycolysis. This Ligilactobacillus salivarius (strain UCC118) (Lactobacillus salivarius) protein is ATP-dependent 6-phosphofructokinase.